The primary structure comprises 642 residues: RNA polymerase sigma factor RpoD (642 aa).

A disordered region spans residues 199–228 (HLETTAPEKPSNDNSDENEDDEESEEDADE). The segment covering 212 to 228 (NSDENEDDEESEEDADE) has biased composition (acidic residues). The segment at 403-473 (MIQANLRLVI…TRSIADQART (71 aa)) is sigma-70 factor domain-2. Residues 427 to 430 (DLIQ) carry the Interaction with polymerase core subunit RpoC motif. A sigma-70 factor domain-3 region spans residues 482–558 (ETINKMNRIS…DANNVAPADA (77 aa)). The interval 571–624 (ILESLTPREAKVLRMRFGIDMNTDHTLEEVGRQFDVTRERIRQIEAKALRKLRH) is sigma-70 factor domain-4. A DNA-binding region (H-T-H motif) is located at residues 597–616 (LEEVGRQFDVTRERIRQIEA).

The protein belongs to the sigma-70 factor family. RpoD/SigA subfamily. As to quaternary structure, interacts transiently with the RNA polymerase catalytic core.

The protein localises to the cytoplasm. Functionally, sigma factors are initiation factors that promote the attachment of RNA polymerase to specific initiation sites and are then released. This sigma factor is the primary sigma factor during exponential growth. The chain is RNA polymerase sigma factor RpoD from Neisseria gonorrhoeae.